The chain runs to 2343 residues: Pecanex-like protein 1 (2343 aa).

A run of 2 helical transmembrane segments spans residues 33-53 and 57-77; these read ALHLYLWLFLLGLPFTLYMAL and MIIVAVYCPVVAAVFIVLKMV. 4 disordered regions span residues 98-163, 271-290, 306-691, and 749-826; these read FTDQ…GSSR, SHSYRKEHRPRGVPRTSSSA, QQQR…TRAR, and TRSR…QGQQ. Residues 143-163 show a composition bias toward polar residues; it reads SSRNSYAGLDPSNQIGSGSSR. Residues 272-282 are compositionally biased toward basic residues; the sequence is HSYRKEHRPRG. Residues 372 to 390 show a composition bias toward low complexity; it reads SLRSLSTRSSGSTESYCSG. Over residues 396–412 the composition is skewed to polar residues; it reads NSTLSSYKSEQTSSTHI. Basic and acidic residues-rich tracts occupy residues 416-457, 507-521, and 530-546; these read LSEH…DKTA, RPPEQSAESKEEQGE, and KVCKDDGGKQKEGDVRP. Over residues 556–571 the composition is skewed to basic residues; the sequence is TSAHKPGRRRTGKKRA. 3 stretches are compositionally biased toward low complexity: residues 624–637, 769–780, and 809–826; these read SDSSSSATSHSCQS, AATGAAQASEEA, and TLLIGPPLSLQDGQQGQQ. Helical transmembrane passes span 978–998, 1009–1029, 1034–1054, 1068–1088, 1118–1138, 1162–1182, 1195–1215, 1268–1288, 1296–1316, 1406–1426, 1434–1454, 1458–1478, and 1493–1513; these read FWILPQLWIGINFDRLTLLAL, ILAVVLAILVAFLGSILLIQG, IWVFQFCLVIASCQYSLLKSV, IIAYSRPVYFCLCCGLIWLLD, LVIVFTLCFPIVFFIGLLPQV, LLAALYSFLCSVVAVALLYGL, HIPVLFSVFCGLLVAVSYHLS, LVVCVVIGVLYFAIHVSTVFT, YVLYALVGFVGLVTHYVLPQV, SFSSPTYQYITVIFTVLFFKF, TMLLDLFFMSILFSKLWELLY, FVYTYVAPWQITWGSAFHAFA, and AVVSALFSTPLNPFLGSAIFI. The segment at 2050-2120 is disordered; it reads EDSDTGGGTS…VQSSLVRQSP (71 aa). Polar residues-rich tracts occupy residues 2060 to 2080 and 2094 to 2117; these read CPANSATTASDPHNSVPQGST and PTTSYPPTLGTSHSAHSVQSSLVR.

It belongs to the pecanex family. In terms of tissue distribution, specifically expressed in the germ line and not in the somatic cells of the testis, reaching its peak at the pachytene stage of the meiotic prophase. Detected in pachytene spermatocytes and round spermatids (at protein level).

The protein resides in the membrane. This Rattus norvegicus (Rat) protein is Pecanex-like protein 1.